The chain runs to 418 residues: Multidrug resistance protein MdtG (418 aa).

11 consecutive transmembrane segments (helical) span residues Ile19–Val39, Leu56–Ala76, Leu90–Ile110, Ala113–Ile133, Thr144–Ala164, Pro171–Ile191, Leu222–Leu242, Val251–Ile271, Ile288–Thr308, Phe317–Asn337, and Ala376–Leu396.

The protein belongs to the major facilitator superfamily. DHA1 family. MdtG (TC 2.A.1.2.20) subfamily.

The protein resides in the cell inner membrane. This is Multidrug resistance protein MdtG from Enterobacter lignolyticus (strain SCF1).